We begin with the raw amino-acid sequence, 532 residues long: Phosphoenolpyruvate carboxykinase (ATP) (532 aa).

Substrate contacts are provided by R60, Y195, and K201. ATP-binding positions include K201, H221, and 237–245 (GLSGTGKTT). The Mn(2+) site is built by K201 and H221. D258 contacts Mn(2+). Positions 287, 323, and 448 each coordinate ATP. R323 contributes to the substrate binding site.

Belongs to the phosphoenolpyruvate carboxykinase (ATP) family. The cofactor is Mn(2+).

Its subcellular location is the cytoplasm. It catalyses the reaction oxaloacetate + ATP = phosphoenolpyruvate + ADP + CO2. Its pathway is carbohydrate biosynthesis; gluconeogenesis. Functionally, involved in the gluconeogenesis. Catalyzes the conversion of oxaloacetate (OAA) to phosphoenolpyruvate (PEP) through direct phosphoryl transfer between the nucleoside triphosphate and OAA. In Christiangramia forsetii (strain DSM 17595 / CGMCC 1.15422 / KT0803) (Gramella forsetii), this protein is Phosphoenolpyruvate carboxykinase (ATP).